We begin with the raw amino-acid sequence, 211 residues long: Histone H1-beta, late embryonic (211 aa).

Disordered stretches follow at residues 1 to 22 (MAAE…PSSS) and 81 to 211 (KGAS…AAKK). The 75-residue stretch at 17–91 (AHPSSSEMVL…GASGSFKLGK (75 aa)) folds into the H15 domain. Basic and acidic residues-rich tracts occupy residues 95-107 (GKSD…DAAK) and 114-123 (KKKEAKEKKA). Basic residues-rich tracts occupy residues 124–177 (ARSK…KKAA) and 185–211 (KAAK…AAKK).

Belongs to the histone H1/H5 family.

It localises to the nucleus. The protein localises to the chromosome. Functionally, histones H1 are necessary for the condensation of nucleosome chains into higher-order structures. The chain is Histone H1-beta, late embryonic from Strongylocentrotus purpuratus (Purple sea urchin).